We begin with the raw amino-acid sequence, 108 residues long: Replication restart protein PriB (108 aa).

The region spanning 8–108 (VDNRFSLIGK…LHAEQIEFIE (101 aa)) is the SSB domain.

The protein belongs to the PriB family. In terms of assembly, homodimer. Interacts with PriA and DnaT. Component of the replication restart primosome. Primosome assembly occurs via a 'hand-off' mechanism. PriA binds to replication forks, subsequently PriB then DnaT bind; DnaT then displaces ssDNA to generate the helicase loading substrate.

Involved in the restart of stalled replication forks, which reloads the replicative helicase on sites other than the origin of replication; the PriA-PriB pathway is the major replication restart pathway. During primosome assembly it facilitates complex formation between PriA and DnaT on DNA; stabilizes PriA on DNA. Stimulates the DNA unwinding activity of PriA helicase. The protein is Replication restart protein PriB of Histophilus somni (strain 2336) (Haemophilus somnus).